Here is a 286-residue protein sequence, read N- to C-terminus: Small ribosomal subunit protein uS15m (286 aa).

The N-terminal 33 residues, 1 to 33 (MSIVGRNAILNLRISLCPLFMGKRSFVSSPVSN), are a transit peptide targeting the mitochondrion.

This sequence belongs to the universal ribosomal protein uS15 family. As to quaternary structure, component of the mitochondrial small ribosomal subunit (mt-SSU). Mature yeast 74S mitochondrial ribosomes consist of a small (37S) and a large (54S) subunit. The 37S small subunit contains a 15S ribosomal RNA (15S mt-rRNA) and 34 different proteins. The 54S large subunit contains a 21S rRNA (21S mt-rRNA) and 46 different proteins. Post-translationally, the precursor is processed in two steps involving mitochondrial intermediate peptidase (MIP) and mitochondrial processing peptidase (MPP).

It is found in the mitochondrion. Functionally, component of the mitochondrial ribosome (mitoribosome), a dedicated translation machinery responsible for the synthesis of mitochondrial genome-encoded proteins, including at least some of the essential transmembrane subunits of the mitochondrial respiratory chain. The mitoribosomes are attached to the mitochondrial inner membrane and translation products are cotranslationally integrated into the membrane. This chain is Small ribosomal subunit protein uS15m (MRPS28), found in Saccharomyces cerevisiae (strain ATCC 204508 / S288c) (Baker's yeast).